A 651-amino-acid chain; its full sequence is E3 SUMO-protein ligase PIAS1 (651 aa).

Ala-2 bears the N-acetylalanine mark. Positions 2–200 (ADSAELKQMV…KCDFTVQVQL (199 aa)) are required for interaction with MSX1. The region spanning 11 to 45 (VMSLRVSELQVLLGYAGRNKHGRKHELLTKALHLL) is the SAP domain. Residues 19–23 (LQVLL) carry the LXXLL motif motif. Glycyl lysine isopeptide (Lys-Gly) (interchain with G-Cter in SUMO2) cross-links involve residues Lys-40 and Lys-46. A Nuclear localization signal motif is present at residues 56–64 (KIKELYRRR). Positions 124 to 288 (HLTSALHPVH…SMAVYLVKQL (165 aa)) constitute a PINIT domain. Residues Lys-137 and Lys-238 each participate in a glycyl lysine isopeptide (Lys-Gly) (interchain with G-Cter in SUMO2) cross-link. The SP-RING-type zinc finger occupies 320–405 (PDSEIATTSL…LKYCTDCDEI (86 aa)). Zn(2+)-binding residues include Cys-351, His-353, Cys-374, and Cys-377. Positions 368 to 380 (KKPTWVCPVCDKK) match the Nuclear localization signal motif. A Glycyl lysine isopeptide (Lys-Gly) (interchain with G-Cter in SUMO2) cross-link involves residue Lys-453. The segment at 462-473 (LTIDSSSDEEEE) is SUMO1-binding. The disordered stretch occupies residues 465 to 511 (DSSSDEEEEEPSAKRTCPSLSPTSPLNNKGILSLPHQASPVSRTPSL). Phosphoserine occurs at positions 467, 468, 483, and 485. A compositionally biased stretch (polar residues) spans 482 to 491 (PSLSPTSPLN). Phosphothreonine is present on Thr-487. Position 488 is a phosphoserine (Ser-488). Lys-493 is covalently cross-linked (Glycyl lysine isopeptide (Lys-Gly) (interchain with G-Cter in SUMO2)). A phosphoserine mark is found at Ser-503, Ser-510, and Ser-522. 2 tandem repeats follow at residues 520-523 (NTSL) and 557-560 (NTSL). The interval 520–615 (NTSLIQDYRH…GSSSGSNSSL (96 aa)) is 4 X 4 AA repeats of N-T-S-L. A 3; approximate repeat occupies 598–601 (STSL). Residues 599-621 (TSLPTTNGSSSGSNSSLVSSNSL) show a composition bias toward low complexity. The tract at residues 599-632 (TSLPTTNGSSSGSNSSLVSSNSLRESHSHTVTNR) is disordered. One copy of the 4; approximate repeat lies at 612–615 (NSSL).

The protein belongs to the PIAS family. In terms of assembly, interacts with NCOA2 and AR. Interacts with NR2C1; the interaction promotes its sumoylation. Interacts with DDX21, CSRP2, AXIN1, JUN, UBE2I, SUMO1, SATB2, PLAG1, TP53 and STAT1 (dimer), following IFNA1-stimulation. Interacts with SP3 (preferentially when SUMO-modified). Interacts with KLF8; the interaction results in SUMO ligation and repression of KLF8 transcriptional activity and of its cell cycle progression into G(1) phase. Interacts with CHUK/IKKA; this interaction induces PIAS1 phosphorylation. Interacts with PTK2/FAK1; the interaction promotes its sumoylation. Interacts with DDX5. Interacts with PML. Interacts with MTA1. Interacts with SUMO1P1/SUMO5. Interacts with PRDM1/Blimp-1. Interacts (via N-terminus) with MSX1 (via C-terminus); the interaction is required for the localization of both proteins to the nuclear periphery and specific binding of MSX1 to the core enhancer region in target gene promoters. (Microbial infection) Interacts with ebolavirus VP35; this interaction mediates the sumoylation of IRF7 and contributes to the viral inhibition of IFN-type I production. Sumoylated. Expressed in numerous tissues with highest level in testis.

It localises to the nucleus. It is found in the nucleus speckle. The protein localises to the PML body. Its subcellular location is the cytoplasm. The protein resides in the cytoskeleton. It functions in the pathway protein modification; protein sumoylation. In terms of biological role, functions as an E3-type small ubiquitin-like modifier (SUMO) ligase, stabilizing the interaction between UBE2I and the substrate, and as a SUMO-tethering factor. Catalyzes sumoylation of various proteins, such as CEBPB, MRE11, MTA1, PTK2 and PML. Plays a crucial role as a transcriptional coregulation in various cellular pathways, including the STAT pathway, the p53 pathway and the steroid hormone signaling pathway. In vitro, binds A/T-rich DNA. The effects of this transcriptional coregulation, transactivation or silencing, may vary depending upon the biological context. Mediates sumoylation of MRE11, stabilizing MRE11 on chromatin during end resection. Sumoylates PML (at 'Lys-65' and 'Lys-160') and PML-RAR and promotes their ubiquitin-mediated degradation. PIAS1-mediated sumoylation of PML promotes its interaction with CSNK2A1/CK2 which in turn promotes PML phosphorylation and degradation. Enhances the sumoylation of MTA1 and may participate in its paralog-selective sumoylation. Plays a dynamic role in adipogenesis by promoting the SUMOylation and degradation of CEBPB. Mediates the nuclear mobility and localization of MSX1 to the nuclear periphery, whereby MSX1 is brought into the proximity of target myoblast differentiation factor genes. Also required for the binding of MSX1 to the core enhancer region in target gene promoter regions, independent of its sumoylation activity. Capable of binding to the core enhancer region TAAT box in the MYOD1 gene promoter. Functionally, (Microbial infection) Restricts Epstein-Barr virus (EBV) lytic replication by acting as an inhibitor for transcription factors involved in lytic gene expression. The virus can use apoptotic caspases to antagonize PIAS1-mediated restriction and express its lytic genes. This Homo sapiens (Human) protein is E3 SUMO-protein ligase PIAS1 (PIAS1).